Here is a 310-residue protein sequence, read N- to C-terminus: HPr kinase/phosphorylase (310 aa).

Residues His138 and Lys159 contribute to the active site. ATP is bound at residue 153 to 160 (GDSGIGKS). Residue Ser160 coordinates Mg(2+). Asp177 serves as the catalytic Proton acceptor; for phosphorylation activity. Proton donor; for dephosphorylation activity. Residues 201–210 (LEIRGVGIID) form an important for the catalytic mechanism of both phosphorylation and dephosphorylation region. Glu202 provides a ligand contact to Mg(2+). Residue Arg243 is part of the active site. Residues 264–269 (PVKTGR) are important for the catalytic mechanism of dephosphorylation.

The protein belongs to the HPrK/P family. Homohexamer. Mg(2+) is required as a cofactor.

The catalysed reaction is [HPr protein]-L-serine + ATP = [HPr protein]-O-phospho-L-serine + ADP + H(+). It carries out the reaction [HPr protein]-O-phospho-L-serine + phosphate + H(+) = [HPr protein]-L-serine + diphosphate. In terms of biological role, catalyzes the ATP- as well as the pyrophosphate-dependent phosphorylation of a specific serine residue in HPr, a phosphocarrier protein of the phosphoenolpyruvate-dependent sugar phosphotransferase system (PTS). HprK/P also catalyzes the pyrophosphate-producing, inorganic phosphate-dependent dephosphorylation (phosphorolysis) of seryl-phosphorylated HPr (P-Ser-HPr). The two antagonistic activities of HprK/P are regulated by several intracellular metabolites, which change their concentration in response to the absence or presence of rapidly metabolisable carbon sources (glucose, fructose, etc.) in the growth medium. Therefore, by controlling the phosphorylation state of HPr, HPrK/P is a sensor enzyme that plays a major role in the regulation of carbon metabolism and sugar transport: it mediates carbon catabolite repression (CCR), and regulates PTS-catalyzed carbohydrate uptake and inducer exclusion. In Streptococcus pyogenes serotype M3 (strain ATCC BAA-595 / MGAS315), this protein is HPr kinase/phosphorylase (hprK).